Consider the following 351-residue polypeptide: MKSLKMLYPLFMLLVLSSKIDLSNQDVIDNILMSLSKGITYFDMQGSNINLDGVVGYIILQAQLREATRTWPHSDFLSLSQRAAAISMLKRLSKSLSTAASTLQETDPKYFKEFEPILDSSFWSLPGEWSSTDPSLVYTSVRAMECYDEHMSDKCMTFLLGTWKDNGTPCIVTKTCRDTMTQFGCPHYSLSHQLLYFMIGTMKGCSKMLKGDLRLSRVNITVGHYKRIFCSNMMKSNQDIFKNSLTGQMQDIFIENILLCGLVGFSDFYKLDWLQSILTWQDQEAGCFGKEEDISHIFEEFLDAPHKRVKRREKTLTDGCSSHMTGVAVSALGGFLNFYLSEQDITKRPII.

The signal sequence occupies residues 1 to 25; sequence MKSLKMLYPLFMLLVLSSKIDLSNQ.

The protein belongs to the UPF0764 family. Homodimer.

Its subcellular location is the secreted. The protein is UPF0764 protein C16orf89 homolog of Danio rerio (Zebrafish).